Consider the following 98-residue polypeptide: Co-chaperonin GroES (98 aa).

Belongs to the GroES chaperonin family. As to quaternary structure, heptamer of 7 subunits arranged in a ring. Interacts with the chaperonin GroEL.

The protein resides in the cytoplasm. Together with the chaperonin GroEL, plays an essential role in assisting protein folding. The GroEL-GroES system forms a nano-cage that allows encapsulation of the non-native substrate proteins and provides a physical environment optimized to promote and accelerate protein folding. GroES binds to the apical surface of the GroEL ring, thereby capping the opening of the GroEL channel. The sequence is that of Co-chaperonin GroES from Beutenbergia cavernae (strain ATCC BAA-8 / DSM 12333 / CCUG 43141 / JCM 11478 / NBRC 16432 / NCIMB 13614 / HKI 0122).